A 245-amino-acid chain; its full sequence is 1-(5-phosphoribosyl)-5-[(5-phosphoribosylamino)methylideneamino] imidazole-4-carboxamide isomerase (245 aa).

Aspartate 10 (proton acceptor) is an active-site residue. The Proton donor role is filled by aspartate 129.

It belongs to the HisA/HisF family.

The protein localises to the cytoplasm. It carries out the reaction 1-(5-phospho-beta-D-ribosyl)-5-[(5-phospho-beta-D-ribosylamino)methylideneamino]imidazole-4-carboxamide = 5-[(5-phospho-1-deoxy-D-ribulos-1-ylimino)methylamino]-1-(5-phospho-beta-D-ribosyl)imidazole-4-carboxamide. It functions in the pathway amino-acid biosynthesis; L-histidine biosynthesis; L-histidine from 5-phospho-alpha-D-ribose 1-diphosphate: step 4/9. The protein is 1-(5-phosphoribosyl)-5-[(5-phosphoribosylamino)methylideneamino] imidazole-4-carboxamide isomerase of Parafrankia sp. (strain EAN1pec).